Here is a 262-residue protein sequence, read N- to C-terminus: MALYFIGLGLYDEKDITLKGLEIARKCDYVFAEFYTSLMAGTNLERIEKLIGKEIRVLSREDVELNFERIVLPLAKDHDVAFLTAGDPLVATTHAELRLRAKKFGVESYVIHAPSIYSAIAITGLHIYKFGKSATISYPEKNWFPTSYYDVIKENLERGLHTLLFLDIKAEKGKYMTANEGMKLLLKVEDMKKEGVFTQETLVVVLARAGSLNPVIRAGYVRDMIREDFGSPPHVLIVPGRLHIVEAEYLVEIAGAPREIIR.

Residues Leu-10, Asp-87, Val-90, 115 to 116 (SI), Leu-166, Ala-209, and His-234 contribute to the S-adenosyl-L-methionine site.

The protein belongs to the diphthine synthase family. Homodimer.

The catalysed reaction is 2-[(3S)-amino-3-carboxypropyl]-L-histidyl-[translation elongation factor 2] + 3 S-adenosyl-L-methionine = diphthine-[translation elongation factor 2] + 3 S-adenosyl-L-homocysteine + 3 H(+). It participates in protein modification; peptidyl-diphthamide biosynthesis. Its function is as follows. S-adenosyl-L-methionine-dependent methyltransferase that catalyzes the trimethylation of the amino group of the modified target histidine residue in translation elongation factor 2 (EF-2), to form an intermediate called diphthine. The three successive methylation reactions represent the second step of diphthamide biosynthesis. This is Diphthine synthase from Pyrococcus abyssi (strain GE5 / Orsay).